A 644-amino-acid chain; its full sequence is Sodium/potassium/calcium exchanger 3 (644 aa).

An N-terminal signal peptide occupies residues 1-44 (MRPSGDEDRARRRRRRRRRRDLLLSQLCFLASVALLLWSLSSLR). The Extracellular segment spans residues 45 to 107 (EQKELDLMDL…DIFTNEDRRQ (63 aa)). N71 and N86 each carry an N-linked (GlcNAc...) asparagine glycan. Residues 108 to 128 (GAVVLHVLCAIYMFYALAIVC) traverse the membrane as a helical segment. The Cytoplasmic segment spans residues 129-153 (DDFFVPSLEKICERLHLSEDVAGAT). One copy of the Alpha-1 repeat lies at 149 to 189 (VAGATFMAAGSSAPELFTSVIGVFITKGDVGVGTIVGSAVF). Residues 154–174 (FMAAGSSAPELFTSVIGVFIT) traverse the membrane as a helical segment. At 175–182 (KGDVGVGT) the chain is on the extracellular side. Residues 183-203 (IVGSAVFNILCIIGVCGLFAG) form a helical membrane-spanning segment. At 204–210 (QVVALSS) the chain is on the cytoplasmic side. Residues 211-231 (WCLLRDSIYYTLSVIALIVFI) traverse the membrane as a helical segment. Residues 232–234 (YDE) are Extracellular-facing. Residues 235 to 255 (KVSWWESLVLVLMYLIYIVIM) form a helical membrane-spanning segment. Residues 256–484 (KYNACIHQCF…WFMVTFASST (229 aa)) lie on the Cytoplasmic side of the membrane. A Phosphoserine modification is found at S308. The disordered stretch occupies residues 405–442 (AEAGNETENENEDNENDEEEEEDEDDDEGPYTPFDTPS). Residues 409 to 433 (NETENENEDNENDEEEEEDEDDDEG) show a composition bias toward acidic residues. A helical transmembrane segment spans residues 485–505 (LWIAAFSYMMVWMVTIIGYTL). At 506–510 (GIPDV) the chain is on the extracellular side. Residues 511-531 (IMGITFLAAGTSVPDCMASLI) traverse the membrane as a helical segment. The stretch at 518–549 (AAGTSVPDCMASLIVARQGMGDMAVSNSIGSN) is one Alpha-2 repeat. Topologically, residues 532 to 549 (VARQGMGDMAVSNSIGSN) are cytoplasmic. Residues 550–570 (VFDILIGLGLPWALQTLAVDY) traverse the membrane as a helical segment. The Extracellular portion of the chain corresponds to 571–580 (GSYIRLNSRG). The chain crosses the membrane as a helical span at residues 581 to 601 (LIYSVGLLLASVFVTVFGVHL). Residues 602 to 615 (NKWQLDKKLGCGCL) are Cytoplasmic-facing. Residues 616-636 (LLYGVFLCFSIMTEFNVFTFV) form a helical membrane-spanning segment. Topologically, residues 637–644 (NLPMCGDH) are extracellular.

The protein belongs to the Ca(2+):cation antiporter (CaCA) (TC 2.A.19) family. SLC24A subfamily. Abundant in the brain. Expressed at low levels in the aorta, uterus and intestine.

The protein localises to the cell membrane. It carries out the reaction Ca(2+)(out) + K(+)(out) + 4 Na(+)(in) = Ca(2+)(in) + K(+)(in) + 4 Na(+)(out). In terms of biological role, calcium, potassium:sodium antiporter that transports 1 Ca(2+) and 1 K(+) in exchange for 4 Na(+). In Homo sapiens (Human), this protein is Sodium/potassium/calcium exchanger 3 (SLC24A3).